Reading from the N-terminus, the 514-residue chain is 2,3-bisphosphoglycerate-independent phosphoglycerate mutase (514 aa).

Mn(2+) is bound by residues Asp-14 and Ser-64. The Phosphoserine intermediate role is filled by Ser-64. Substrate-binding positions include His-125, 155-156 (RD), Arg-187, Arg-193, 263-266 (RADR), and Lys-336. 5 residues coordinate Mn(2+): Asp-403, His-407, Asp-444, His-445, and His-463.

It belongs to the BPG-independent phosphoglycerate mutase family. In terms of assembly, monomer. Mn(2+) serves as cofactor.

It carries out the reaction (2R)-2-phosphoglycerate = (2R)-3-phosphoglycerate. Its pathway is carbohydrate degradation; glycolysis; pyruvate from D-glyceraldehyde 3-phosphate: step 3/5. Catalyzes the interconversion of 2-phosphoglycerate and 3-phosphoglycerate. The polypeptide is 2,3-bisphosphoglycerate-independent phosphoglycerate mutase (Shewanella sp. (strain MR-7)).